A 108-amino-acid polypeptide reads, in one-letter code: Circadian clock oscillator protein KaiB (108 aa).

It belongs to the KaiB family. May undergo a major conformational rearrangment; in the free state forms homooligomers. When bound to KaiC switches to a monomeric thioredoxin-fold (KaiB(fs)). The active oscillator complex is probably KaiC(6):KaiB(6).

In terms of biological role, component of the KaiBC clock protein complex, which constitutes the main circadian regulator in cyanobacteria; it may modify the ATPase activity of KaiC. Its function is as follows. May be a metamorphic protein which reversibly switches between an inactive tetrameric fold and a rare, thioredoxin-like monomeric fold (KaiB(fs)). KaiB(fs) binds phospho-KaiC, and perhaps clock output effectors. The polypeptide is Circadian clock oscillator protein KaiB (Prochlorococcus marinus (strain MIT 9515)).